Reading from the N-terminus, the 255-residue chain is MFNSDNLRLDGKCAIITGAGAGIGKEIAITFATAGASVVVSDINADAANHVVDEIQQLGGQAFACRCDITSEQELSALADFAISKLGKVDILVNNAGGGGPKPFDMPMADFRRAYELNVFSFFHLSQLVAPEMEKNGGGVILTITSMAAENKNINMTSYASSKAAASHLVRNMAFDLGEKNIRVNGIAPGAILTDALKSVITPEIEQKMLQHTPIRRLGQPQDIANAALFLCSPAASWVSGQILTVSGGGVQELN.

NAD(+) contacts are provided by residues Ile-23, 42 to 43 (DI), 68 to 69 (DI), and Asn-95. Glycochenodeoxycholate is bound by residues Gly-99, Ser-146, Asn-151, and Tyr-159. Residues Tyr-159, Lys-163, and 192–194 (ILT) each bind NAD(+). Tyr-159 acts as the Proton acceptor in catalysis.

The protein belongs to the short-chain dehydrogenases/reductases (SDR) family. As to quaternary structure, homotetramer.

It catalyses the reaction cholate + NAD(+) = 3alpha,12alpha-dihydroxy-7-oxo-5beta-cholanate + NADH + H(+). It carries out the reaction chenodeoxycholate + NAD(+) = 7-oxolithocholate + NADH + H(+). The catalysed reaction is taurochenodeoxycholate + NAD(+) = 7-oxotaurolithocholate + NADH + H(+). The enzyme catalyses taurocholate + NAD(+) = 7-oxo-taurodeoxycholate + NADH + H(+). It catalyses the reaction glycocholate + NAD(+) = 7-oxo-glycodeoxycholate + NADH + H(+). It carries out the reaction glycochenodeoxycholate + NAD(+) = 7-oxoglycolithocholate + NADH + H(+). Its function is as follows. 7alpha-hydroxysteroid dehydrogenase involved in the metabolism of bile acids. Catalyzes the NAD(+)-dependent oxidation of the 7alpha-hydroxy group of 7alpha-hydroxysteroids, such as the major human bile acids cholate and chenodeoxycholate, to the corresponding 7-oxosteroids. To a lesser extent, can also act on taurochenodeoxycholate, taurocholate and glycocholate. Can also use glycochenodeoxycholate as substrate. Is not able to use NADP(+) instead of NAD(+) as the electron acceptor. This Escherichia coli O157:H7 protein is 7alpha-hydroxysteroid dehydrogenase (hdhA).